We begin with the raw amino-acid sequence, 539 residues long: T-complex protein 1 subunit delta (539 aa).

A disordered region spans residues 1-28; that stretch reads MPENVASRSGPPAAGPGNRGKGAYQDRD. R19 bears the Omega-N-methylarginine mark. An N6-acetyllysine modification is found at K21. S36 bears the Phosphoserine mark. G53 is an ADP binding site. G53 is an ATP binding site. Mg(2+) is bound at residue D104. The ADP site is built by G105, T106, T107, S108, N172, S173, and K174. Residues G105 and T106 each coordinate ATP. Residue K174 coordinates ATP. 2 positions are modified to phosphoserine: S184 and S202. K288, K302, K319, and K326 each carry N6-acetyllysine. G425 is a binding site for ADP. At S444 the chain carries Phosphoserine. Position 510 (Q510) interacts with ADP.

Belongs to the TCP-1 chaperonin family. In terms of assembly, component of the chaperonin-containing T-complex (TRiC), a hexadecamer composed of two identical back-to-back stacked rings enclosing a protein folding chamber. Each ring is made up of eight different subunits: TCP1/CCT1, CCT2, CCT3, CCT4, CCT5, CCT6A/CCT6, CCT7, CCT8. Interacts with PACRG. Interacts with DNAAF4. Interacts with DLEC1.

It localises to the cytoplasm. The protein resides in the melanosome. The protein localises to the cytoskeleton. Its subcellular location is the microtubule organizing center. It is found in the centrosome. It localises to the cilium basal body. The catalysed reaction is ATP + H2O = ADP + phosphate + H(+). Its function is as follows. Component of the chaperonin-containing T-complex (TRiC), a molecular chaperone complex that assists the folding of actin, tubulin and other proteins upon ATP hydrolysis. The TRiC complex mediates the folding of WRAP53/TCAB1, thereby regulating telomere maintenance. As part of the TRiC complex may play a role in the assembly of BBSome, a complex involved in ciliogenesis regulating transports vesicles to the cilia. In Rattus norvegicus (Rat), this protein is T-complex protein 1 subunit delta (Cct4).